Reading from the N-terminus, the 417-residue chain is NADH-quinone oxidoreductase subunit D (417 aa).

Belongs to the complex I 49 kDa subunit family. In terms of assembly, NDH-1 is composed of 14 different subunits. Subunits NuoB, C, D, E, F, and G constitute the peripheral sector of the complex.

Its subcellular location is the cell inner membrane. It carries out the reaction a quinone + NADH + 5 H(+)(in) = a quinol + NAD(+) + 4 H(+)(out). NDH-1 shuttles electrons from NADH, via FMN and iron-sulfur (Fe-S) centers, to quinones in the respiratory chain. The immediate electron acceptor for the enzyme in this species is believed to be ubiquinone. Couples the redox reaction to proton translocation (for every two electrons transferred, four hydrogen ions are translocated across the cytoplasmic membrane), and thus conserves the redox energy in a proton gradient. This Chromobacterium violaceum (strain ATCC 12472 / DSM 30191 / JCM 1249 / CCUG 213 / NBRC 12614 / NCIMB 9131 / NCTC 9757 / MK) protein is NADH-quinone oxidoreductase subunit D.